The following is a 283-amino-acid chain: Pantothenate synthetase (283 aa).

30–37 (MGNLHSGH) contacts ATP. The active-site Proton donor is His-37. Gln-61 contributes to the (R)-pantoate binding site. Gln-61 provides a ligand contact to beta-alanine. Residue 149–152 (GQKD) coordinates ATP. Gln-155 contributes to the (R)-pantoate binding site. ATP contacts are provided by residues Val-178 and 186-189 (LSSR).

It belongs to the pantothenate synthetase family. As to quaternary structure, homodimer.

It localises to the cytoplasm. It catalyses the reaction (R)-pantoate + beta-alanine + ATP = (R)-pantothenate + AMP + diphosphate + H(+). The protein operates within cofactor biosynthesis; (R)-pantothenate biosynthesis; (R)-pantothenate from (R)-pantoate and beta-alanine: step 1/1. Its function is as follows. Catalyzes the condensation of pantoate with beta-alanine in an ATP-dependent reaction via a pantoyl-adenylate intermediate. The protein is Pantothenate synthetase of Pseudomonas fluorescens (strain SBW25).